The chain runs to 334 residues: Glyoxylate reductase (334 aa).

NADP(+) contacts are provided by residues 158-161 (LGRI), 180-182 (SRT), and 239-241 (IAR). Catalysis depends on residues R241 and E270. The active-site Proton donor is the H288. Position 288 to 290 (288 to 290 (HIG)) interacts with NADP(+).

The protein belongs to the D-isomer specific 2-hydroxyacid dehydrogenase family. GyaR subfamily. Homodimer.

It is found in the cytoplasm. It catalyses the reaction glycolate + NAD(+) = glyoxylate + NADH + H(+). The chain is Glyoxylate reductase (gyaR) from Pyrococcus horikoshii (strain ATCC 700860 / DSM 12428 / JCM 9974 / NBRC 100139 / OT-3).